Consider the following 194-residue polypeptide: Peptidyl-tRNA hydrolase (194 aa).

Y17 lines the tRNA pocket. The active-site Proton acceptor is the H22. 3 residues coordinate tRNA: F68, N70, and N116.

This sequence belongs to the PTH family. In terms of assembly, monomer.

It localises to the cytoplasm. It catalyses the reaction an N-acyl-L-alpha-aminoacyl-tRNA + H2O = an N-acyl-L-amino acid + a tRNA + H(+). Functionally, hydrolyzes ribosome-free peptidyl-tRNAs (with 1 or more amino acids incorporated), which drop off the ribosome during protein synthesis, or as a result of ribosome stalling. In terms of biological role, catalyzes the release of premature peptidyl moieties from peptidyl-tRNA molecules trapped in stalled 50S ribosomal subunits, and thus maintains levels of free tRNAs and 50S ribosomes. This is Peptidyl-tRNA hydrolase from Haemophilus influenzae (strain 86-028NP).